We begin with the raw amino-acid sequence, 545 residues long: ATP synthase subunit alpha (545 aa).

173–180 (GDRQTGKT) is a binding site for ATP.

This sequence belongs to the ATPase alpha/beta chains family. F-type ATPases have 2 components, CF(1) - the catalytic core - and CF(0) - the membrane proton channel. CF(1) has five subunits: alpha(3), beta(3), gamma(1), delta(1), epsilon(1). CF(0) has three main subunits: a(1), b(2) and c(9-12). The alpha and beta chains form an alternating ring which encloses part of the gamma chain. CF(1) is attached to CF(0) by a central stalk formed by the gamma and epsilon chains, while a peripheral stalk is formed by the delta and b chains.

It localises to the cell membrane. The catalysed reaction is ATP + H2O + 4 H(+)(in) = ADP + phosphate + 5 H(+)(out). Its function is as follows. Produces ATP from ADP in the presence of a proton gradient across the membrane. The alpha chain is a regulatory subunit. This is ATP synthase subunit alpha from Paenarthrobacter aurescens (strain TC1).